Reading from the N-terminus, the 409-residue chain is Dihydrolipoyllysine-residue succinyltransferase component of 2-oxoglutarate dehydrogenase complex (409 aa).

The region spanning 2-77 (AIEIKAPTFP…LSNELLGKLN (76 aa)) is the Lipoyl-binding domain. The residue at position 43 (Lys43) is an N6-lipoyllysine. The 38-residue stretch at 112-149 (ILSPAARKLAEEAGIDPNSIAGTGKGGRVTKEDVVAAV) folds into the Peripheral subunit-binding (PSBD) domain. Active-site residues include His380 and Asp384.

It belongs to the 2-oxoacid dehydrogenase family. Forms a 24-polypeptide structural core with octahedral symmetry. Part of the 2-oxoglutarate dehydrogenase (OGDH) complex composed of E1 (2-oxoglutarate dehydrogenase), E2 (dihydrolipoamide succinyltransferase) and E3 (dihydrolipoamide dehydrogenase); the complex contains multiple copies of the three enzymatic components (E1, E2 and E3). Requires (R)-lipoate as cofactor.

The catalysed reaction is N(6)-[(R)-dihydrolipoyl]-L-lysyl-[protein] + succinyl-CoA = N(6)-[(R)-S(8)-succinyldihydrolipoyl]-L-lysyl-[protein] + CoA. The protein operates within amino-acid degradation; L-lysine degradation via saccharopine pathway; glutaryl-CoA from L-lysine: step 6/6. Functionally, E2 component of the 2-oxoglutarate dehydrogenase (OGDH) complex which catalyzes the second step in the conversion of 2-oxoglutarate to succinyl-CoA and CO(2). In Pseudomonas aeruginosa (strain ATCC 15692 / DSM 22644 / CIP 104116 / JCM 14847 / LMG 12228 / 1C / PRS 101 / PAO1), this protein is Dihydrolipoyllysine-residue succinyltransferase component of 2-oxoglutarate dehydrogenase complex (sucB).